The primary structure comprises 107 residues: MSITLSDSAAARVSSFLENRGKGYGLRLGVRTSGCSGMAYVLEFVDEPATDDTVFEDKGVKVVIDGKSLQFLDGTQLDFVKEGLNEGFKFTNPNVKDECGCGESFHV.

3 residues coordinate Fe cation: C35, C99, and C101.

Belongs to the HesB/IscA family. Homodimer; may form tetramers and higher multimers. Requires Fe cation as cofactor.

Is able to transfer iron-sulfur clusters to apo-ferredoxin. Multiple cycles of [2Fe2S] cluster formation and transfer are observed, suggesting that IscA acts catalytically. Recruits intracellular free iron so as to provide iron for the assembly of transient iron-sulfur cluster in IscU in the presence of IscS, L-cysteine and the thioredoxin reductase system TrxA/TrxB. This chain is Iron-binding protein IscA, found in Enterobacter sp. (strain 638).